The chain runs to 212 residues: N-(5'-phosphoribosyl)anthranilate isomerase (212 aa).

Belongs to the TrpF family.

It catalyses the reaction N-(5-phospho-beta-D-ribosyl)anthranilate = 1-(2-carboxyphenylamino)-1-deoxy-D-ribulose 5-phosphate. It participates in amino-acid biosynthesis; L-tryptophan biosynthesis; L-tryptophan from chorismate: step 3/5. This Roseiflexus castenholzii (strain DSM 13941 / HLO8) protein is N-(5'-phosphoribosyl)anthranilate isomerase.